A 617-amino-acid polypeptide reads, in one-letter code: E3 ubiquitin-protein ligase synoviolin (617 aa).

The Cytoplasmic segment spans residues 1–4 (MFRT). The tract at residues 1 to 84 (MFRTAVMMAA…EHLLERSWYA (84 aa)) is necessary and sufficient for SEL1L interaction. The interval 1–251 (MFRTAVMMAA…LFAIRPMYLA (251 aa)) is involved in FAM8A1 interaction. A helical membrane pass occupies residues 5 to 25 (AVMMAASLALTGAVVAHAYYL). The Lumenal segment spans residues 26–41 (KHQFYPTVVYLTKSSP). A helical transmembrane segment spans residues 42–62 (SMAVLYIQAFVLVFLLGKVMG). At 63 to 98 (KVFFGQLRAAEMEHLLERSWYAVTETCLAFTVFRDD) the chain is on the cytoplasmic side. Residues 99-119 (FSPRFVALFTLLLFLKCFHWL) traverse the membrane as a helical segment. The Lumenal portion of the chain corresponds to 120 to 140 (AEDRVDFMERSPNISWLFHCR). The helical transmembrane segment at 141–161 (IVSLMFLLGILDFLFVSHAYH) threads the bilayer. The Cytoplasmic segment spans residues 162–169 (SILTRGAS). Residues 170–190 (VQLVFGFEYAILMTMVLTIFI) traverse the membrane as a helical segment. Residues 191–224 (KYVLHSVDLQSENPWDNKAVYMLYTELFTGFIKV) are Lumenal-facing. Residues 225–245 (LLYMAFMTIMIKVHTFPLFAI) traverse the membrane as a helical segment. Positions 236–270 (KVHTFPLFAIRPMYLAMRQFKKAVTDAIMSRRAIR) are interaction with p53/TP53. At 246 to 617 (RPMYLAMRQF…LQKLESPVAH (372 aa)) the chain is on the cytoplasmic side. Cysteine 291, cysteine 294, cysteine 307, histidine 309, histidine 312, cysteine 315, cysteine 326, and cysteine 329 together coordinate Zn(2+). The segment at 291-330 (CIICREEMVTGAKRLPCNHIFHTSCLRSWFQRQQTCPTCR) adopts an RING-type; atypical zinc-finger fold. Disordered regions lie at residues 337–375 (SLPA…GLLP), 393–453 (PVPP…PAPG), and 535–617 (RPAT…PVAH). A compositionally biased stretch (pro residues) spans 341-375 (QSPPPPEPADQGPPPAPHPPPLLPQPPNFPQGLLP). The segment covering 417–451 (PSGAATTTAAGTSATAASATASGPGSGSAPEAGPA) has biased composition (low complexity). Residues 480-535 (GFAGLTPEELRALEGHERQHLEARLQSLRNIHTLLDAAMLQINQYLTVLASLGPPR) form an HAF-H domain; necessary to form higher-order Hrd1 complexes region. A compositionally biased stretch (low complexity) spans 537–569 (ATSVNSTEETATTVVAAASSTSIPSSEATTPTP). Residues 591–600 (EMPEDGEPDA) are compositionally biased toward acidic residues. Serine 613 is modified (phosphoserine).

The protein belongs to the HRD1 family. In terms of assembly, homodimer. Interacts with p53/TP53. Interacts with HTT. Component of the HRD1 complex, which comprises at least SYNV1/HRD1, DERL1/2, FAM8A1, HERPUD1/HERP, OS9, SEL1L and UBE2J1. FAM8A1 is stabilized by interaction with SYNV1, which prevents its proteasomal degradation. OS9 and UBE2J1 recruitment to the complex may be mediated by SEL1L. SYNV1 assembles with SEL1L and FAM8A1 through its transmembrane domains, but interaction with its cytoplasmic domain is required to confer stability to FAM8A1 and enhance recruitment of HERPUD1. The HRD1 complex also associates with VIMP and may transfer misfolded proteins from the endoplasmic reticulum to VCP. May form a complex with ERLEC1, HSPA5, OS9 and SEL1L. Interacts with VCP. Interacts with UBXN6. Interacts with BAG6. Interacts with NFE2L1. Interacts (via N-terminus) with components of the pre-B cell receptor, including IGLL1 and VPREB1. Interacts with CREB3L3; this interaction leads to CREB3L3 ubiquitination and proteasomal degradation. Not N-glycosylated. Post-translationally, auto-ubiquitinated. Deubiquitinated by USP19. Ubiquitously expressed, with highest levels in liver and kidney (at protein level). Up-regulated in synovial tissues from patients with rheumatoid arthritis (at protein level).

It is found in the endoplasmic reticulum membrane. The catalysed reaction is S-ubiquitinyl-[E2 ubiquitin-conjugating enzyme]-L-cysteine + [acceptor protein]-L-lysine = [E2 ubiquitin-conjugating enzyme]-L-cysteine + N(6)-ubiquitinyl-[acceptor protein]-L-lysine.. It participates in protein modification; protein ubiquitination. Its function is as follows. E3 ubiquitin-protein ligase which accepts ubiquitin specifically from endoplasmic reticulum-associated UBC7 E2 ligase and transfers it to substrates, promoting their degradation. Component of the endoplasmic reticulum quality control (ERQC) system also called ER-associated degradation (ERAD) involved in ubiquitin-dependent degradation of misfolded endoplasmic reticulum proteins. Also promotes the degradation of normal but naturally short-lived proteins such as SGK. Protects cells from ER stress-induced apoptosis. Protects neurons from apoptosis induced by polyglutamine-expanded huntingtin (HTT) or unfolded GPR37 by promoting their degradation. Sequesters p53/TP53 in the cytoplasm and promotes its degradation, thereby negatively regulating its biological function in transcription, cell cycle regulation and apoptosis. Mediates the ubiquitination and subsequent degradation of cytoplasmic NFE2L1. During the early stage of B cell development, required for degradation of the pre-B cell receptor (pre-BCR) complex, hence supporting further differentiation into mature B cells. This chain is E3 ubiquitin-protein ligase synoviolin, found in Homo sapiens (Human).